Here is a 1154-residue protein sequence, read N- to C-terminus: Chromosome partition protein Smc (1154 aa).

An ATP-binding site is contributed by 32-39; sequence PNGCGKSN. 3 coiled-coil regions span residues 170-215, 282-505, and 627-993; these read VAGL…ARQA, LREA…LNGE, and AARR…EARE.

Belongs to the SMC family. As to quaternary structure, homodimer.

It is found in the cytoplasm. Functionally, required for chromosome condensation and partitioning. The sequence is that of Chromosome partition protein Smc from Rhodopseudomonas palustris (strain ATCC BAA-98 / CGA009).